The primary structure comprises 387 residues: 1-hydroxy-2-naphthoate 1,2-dioxygenasee (387 aa).

2 consecutive Cupin type-2 domains span residues 103–171 (FQLV…VWLD) and 271–337 (VQRL…VLLF).

As to quaternary structure, homohexamer. Fe(2+) serves as cofactor.

The catalysed reaction is 1-hydroxy-2-naphthoate + O2 = (3Z)-4-(2-carboxyphenyl)-2-oxobut-3-enoate + H(+). In terms of biological role, dioxygenase involved in phenanthrene catabolism by mediating cleavage of 1-hydroxy-2-naphthoate. In Nocardioides sp. (strain KP7), this protein is 1-hydroxy-2-naphthoate 1,2-dioxygenasee (phdI).